Reading from the N-terminus, the 85-residue chain is MLLSVLLQAAAAGVGLSKLGAALGAGLAVIGAGIGIGKIGGSAMEGIARQPEASGDIRMNMIIAAALVEGVALLALVVCLLVLFL.

The next 2 helical transmembrane spans lie at 19–39 (LGAA…IGKI) and 62–82 (IIAA…CLLV).

This sequence belongs to the ATPase C chain family. As to quaternary structure, F-type ATPases have 2 components, F(1) - the catalytic core - and F(0) - the membrane proton channel. F(1) has five subunits: alpha(3), beta(3), gamma(1), delta(1), epsilon(1). F(0) has three main subunits: a(1), b(2) and c(10-14). The alpha and beta chains form an alternating ring which encloses part of the gamma chain. F(1) is attached to F(0) by a central stalk formed by the gamma and epsilon chains, while a peripheral stalk is formed by the delta and b chains.

The protein resides in the cell inner membrane. Its function is as follows. F(1)F(0) ATP synthase produces ATP from ADP in the presence of a proton or sodium gradient. F-type ATPases consist of two structural domains, F(1) containing the extramembraneous catalytic core and F(0) containing the membrane proton channel, linked together by a central stalk and a peripheral stalk. During catalysis, ATP synthesis in the catalytic domain of F(1) is coupled via a rotary mechanism of the central stalk subunits to proton translocation. In terms of biological role, key component of the F(0) channel; it plays a direct role in translocation across the membrane. A homomeric c-ring of between 10-14 subunits forms the central stalk rotor element with the F(1) delta and epsilon subunits. This chain is ATP synthase subunit c, found in Bacteroides fragilis (strain ATCC 25285 / DSM 2151 / CCUG 4856 / JCM 11019 / LMG 10263 / NCTC 9343 / Onslow / VPI 2553 / EN-2).